A 301-amino-acid chain; its full sequence is Phosducin-like protein (301 aa).

An N-acetylthreonine modification is found at Thr2. The segment at 18 to 57 (SSSEDEDSDHEDKDRGRCAPASSSVPAEAELAGEGISVNT) is disordered. A phosphoserine mark is found at Ser20 and Ser25. Positions 36-49 (APASSSVPAEAELA) are enriched in low complexity. The Phosducin domain occupies 36–299 (APASSSVPAE…TCHSEDSDLE (264 aa)). Ser226, Ser293, and Ser296 each carry phosphoserine.

Belongs to the phosducin family. In terms of assembly, forms a complex with the beta and gamma subunits of the GTP-binding protein, transducin. Interacts with the CCT chaperonin complex.

It is found in the cell projection. Its subcellular location is the cilium. Acts as a positive regulator of hedgehog signaling and regulates ciliary function. In terms of biological role, functions as a co-chaperone for CCT in the assembly of heterotrimeric G protein complexes, facilitates the assembly of both Gbeta-Ggamma and RGS-Gbeta5 heterodimers. Functionally, acts as a negative regulator of heterotrimeric G proteins assembly by trapping the preloaded G beta subunits inside the CCT chaperonin. The sequence is that of Phosducin-like protein (PDCL) from Homo sapiens (Human).